We begin with the raw amino-acid sequence, 156 residues long: Small ribosomal subunit protein uS7 (156 aa).

Belongs to the universal ribosomal protein uS7 family. In terms of assembly, part of the 30S ribosomal subunit. Contacts proteins S9 and S11.

In terms of biological role, one of the primary rRNA binding proteins, it binds directly to 16S rRNA where it nucleates assembly of the head domain of the 30S subunit. Is located at the subunit interface close to the decoding center, probably blocks exit of the E-site tRNA. This Colwellia psychrerythraea (strain 34H / ATCC BAA-681) (Vibrio psychroerythus) protein is Small ribosomal subunit protein uS7.